A 363-amino-acid chain; its full sequence is Peroxin-36 (363 aa).

Topologically, residues 1–193 (MSNLEKQIRL…ESFFINSFEQ (193 aa)) are cytoplasmic. Disordered regions lie at residues 71–114 (QNHQ…DTST) and 128–157 (TNSN…SKSG). Positions 97–114 (VDSNSDSSSSETLIDTST) are enriched in low complexity. Residues 194-213 (LIALFDNFYFLSSLIGFNTS) form a helical membrane-spanning segment. The Peroxisomal segment spans residues 214–232 (NSNSKITRLLRNFIKQASK). The helical transmembrane segment at 233-250 (IWLVIIFLTVKNLFIRMI) threads the bilayer. At 251-363 (KLNRTEKKVK…SSDDIIDEYA (113 aa)) the chain is on the cytoplasmic side.

The protein resides in the peroxisome membrane. Its function is as follows. Controls peroxisome morphology and abundance under conditions of peroxisome proliferation such as oleate and methanol media. Has additional function(s), which is not present in its functional homologs such as Saccharomyces cerevisea PEX34 or human PEX16. The sequence is that of Peroxin-36 from Komagataella phaffii (strain GS115 / ATCC 20864) (Yeast).